We begin with the raw amino-acid sequence, 343 residues long: L-threonine 3-dehydrogenase (343 aa).

Residue Cys40 participates in Zn(2+) binding. Catalysis depends on charge relay system residues Thr42 and His45. His65, Glu66, Cys95, Cys98, Cys101, and Cys109 together coordinate Zn(2+). Residues Ile177, Asp197, Arg202, 264-266 (LGI), and 288-289 (IY) each bind NAD(+).

Belongs to the zinc-containing alcohol dehydrogenase family. As to quaternary structure, homotetramer. The cofactor is Zn(2+).

It is found in the cytoplasm. It carries out the reaction L-threonine + NAD(+) = (2S)-2-amino-3-oxobutanoate + NADH + H(+). It functions in the pathway amino-acid degradation; L-threonine degradation via oxydo-reductase pathway; glycine from L-threonine: step 1/2. In terms of biological role, catalyzes the NAD(+)-dependent oxidation of L-threonine to 2-amino-3-ketobutyrate. The protein is L-threonine 3-dehydrogenase of Vibrio vulnificus (strain YJ016).